A 360-amino-acid chain; its full sequence is Photosystem II protein D1 (360 aa).

Transmembrane regions (helical) follow at residues 29-46, 118-133, and 142-156; these read YIGW…TATS, HFLL…EWEL, and WISV…AAAA. Residue His-118 coordinates chlorophyll a. Tyr-126 is a pheophytin a binding site. The [CaMn4O5] cluster site is built by Asp-170 and Glu-189. Residues 197–218 form a helical membrane-spanning segment; the sequence is FHQLGVAGVFGGSLFSAMHGSL. A chlorophyll a-binding site is contributed by His-198. A quinone-binding positions include His-215 and 264 to 265; that span reads SF. Position 215 (His-215) interacts with Fe cation. A Fe cation-binding site is contributed by His-272. Residues 274 to 288 form a helical membrane-spanning segment; the sequence is FLGLWPVVGIWFTAM. [CaMn4O5] cluster is bound by residues His-332, Glu-333, Asp-342, and Ala-344. Residues 345-360 constitute a propeptide that is removed on maturation; the sequence is SSNSLPVSLVAPSVNG.

The protein belongs to the reaction center PufL/M/PsbA/D family. In terms of assembly, PSII is composed of 1 copy each of membrane proteins PsbA, PsbB, PsbC, PsbD, PsbE, PsbF, PsbH, PsbI, PsbJ, PsbK, PsbL, PsbM, PsbT, PsbX, PsbY, PsbZ, Psb30/Ycf12, at least 3 peripheral proteins of the oxygen-evolving complex and a large number of cofactors. It forms dimeric complexes. The D1/D2 heterodimer binds P680, chlorophylls that are the primary electron donor of PSII, and subsequent electron acceptors. It shares a non-heme iron and each subunit binds pheophytin, quinone, additional chlorophylls, carotenoids and lipids. D1 provides most of the ligands for the Mn4-Ca-O5 cluster of the oxygen-evolving complex (OEC). There is also a Cl(-1) ion associated with D1 and D2, which is required for oxygen evolution. The PSII complex binds additional chlorophylls, carotenoids and specific lipids. is required as a cofactor. Tyr-161 forms a radical intermediate that is referred to as redox-active TyrZ, YZ or Y-Z. Post-translationally, C-terminally processed by CTPA; processing is essential to allow assembly of the oxygen-evolving complex and thus photosynthetic growth.

It is found in the plastid. It localises to the chloroplast thylakoid membrane. The catalysed reaction is 2 a plastoquinone + 4 hnu + 2 H2O = 2 a plastoquinol + O2. Photosystem II (PSII) is a light-driven water:plastoquinone oxidoreductase that uses light energy to abstract electrons from H(2)O, generating O(2) and a proton gradient subsequently used for ATP formation. It consists of a core antenna complex that captures photons, and an electron transfer chain that converts photonic excitation into a charge separation. The D1/D2 (PsbA/PsbD) reaction center heterodimer binds P680, the primary electron donor of PSII as well as several subsequent electron acceptors. This is Photosystem II protein D1 from Gracilaria tenuistipitata var. liui (Red alga).